Reading from the N-terminus, the 344-residue chain is N-acetyl-gamma-glutamyl-phosphate reductase (344 aa).

Cysteine 150 is a catalytic residue.

It belongs to the NAGSA dehydrogenase family. Type 1 subfamily.

The protein localises to the cytoplasm. It catalyses the reaction N-acetyl-L-glutamate 5-semialdehyde + phosphate + NADP(+) = N-acetyl-L-glutamyl 5-phosphate + NADPH + H(+). It functions in the pathway amino-acid biosynthesis; L-arginine biosynthesis; N(2)-acetyl-L-ornithine from L-glutamate: step 3/4. In terms of biological role, catalyzes the NADPH-dependent reduction of N-acetyl-5-glutamyl phosphate to yield N-acetyl-L-glutamate 5-semialdehyde. The sequence is that of N-acetyl-gamma-glutamyl-phosphate reductase from Pseudomonas putida (strain W619).